The following is a 195-amino-acid chain: ATP-dependent Clp protease proteolytic subunit (195 aa).

Ser-99 serves as the catalytic Nucleophile. Residue His-124 is part of the active site.

It belongs to the peptidase S14 family. Fourteen ClpP subunits assemble into 2 heptameric rings which stack back to back to give a disk-like structure with a central cavity, resembling the structure of eukaryotic proteasomes.

It localises to the cytoplasm. It carries out the reaction Hydrolysis of proteins to small peptides in the presence of ATP and magnesium. alpha-casein is the usual test substrate. In the absence of ATP, only oligopeptides shorter than five residues are hydrolyzed (such as succinyl-Leu-Tyr-|-NHMec, and Leu-Tyr-Leu-|-Tyr-Trp, in which cleavage of the -Tyr-|-Leu- and -Tyr-|-Trp bonds also occurs).. In terms of biological role, cleaves peptides in various proteins in a process that requires ATP hydrolysis. Has a chymotrypsin-like activity. Plays a major role in the degradation of misfolded proteins. The sequence is that of ATP-dependent Clp protease proteolytic subunit from Caldicellulosiruptor saccharolyticus (strain ATCC 43494 / DSM 8903 / Tp8T 6331).